The chain runs to 376 residues: Calcium uniporter protein, mitochondrial (376 aa).

A mitochondrion-targeting transit peptide spans 1–34 (MAAKVCRSVLLLSRSSGAVASSAYPAFGVSSQRH). The Mitochondrial matrix portion of the chain corresponds to 35–257 (QGTKTEALSM…LSKKAERRTT (223 aa)). An N-terminal MCU domain region spans residues 99–189 (VSVVYQNGLP…TSYLVQPPRR (91 aa)). Residues 213 to 254 (TLRIEEHQLNKERELIGRLEDLNSQLQPLEKVKEELSKKAER) are a coiled coil. The helical transmembrane segment at 258-280 (WVLWGGMAYMATQFGILARLTWW) threads the bilayer. The Mitochondrial intermembrane segment spans residues 281 to 289 (EYSWDIMEP). A Selectivity filter motif is present at residues 284 to 292 (WDIMEPVTY). Glutamate 288 lines the Ca(2+) pocket. Residues 290 to 309 (VTYFITYGTAMAMYAYFVLT) form a helical membrane-spanning segment. Positions 309 to 314 (TRQEYL) are juxtamembrane helix. Over 310 to 376 (RQEYLYPDAR…PIQQIDTSKD (67 aa)) the chain is Mitochondrial matrix. A coiled-coil region spans residues 336–363 (FDIEKYNKLKDAIAEAELDLKRLRDPLQ).

Belongs to the MCU (TC 1.A.77) family. In terms of assembly, homotetramer. Component of the uniplex complex.

The protein resides in the mitochondrion inner membrane. The enzyme catalyses Ca(2+)(in) = Ca(2+)(out). With respect to regulation, MCU channel activity is regulated by the heterodimer composed of micu1 and micu2, which act as calcium-sensors. At low calcium levels, micu1 occludes the pore of the MCU channel, preventing mitochondrial calcium uptake. At higher calcium levels, calcium-binding to micu1 and micu2 induces a conformational change that weakens mcu-micu1 interactions and moves the micu1-micu2 heterodimer away from the pore, allowing calcium permeation through the channel. MCU channel activity is gated by emre/smdt1 via the juxtamembrane helix loop. Inhibited by ruthenium red or its derivative Ru360. Its function is as follows. Channel-forming and calcium-conducting subunit of the mitochondrial inner membrane calcium uniporter complex (uniplex), which mediates calcium uptake into the mitochondrial matrix. Mcu channel activity is regulated by the calcium-sensor subunits of the uniplex micu1 and micu2. Mitochondrial calcium homeostasis plays key roles in cellular physiology and regulates ATP production, cytoplasmic calcium signals and activation of cell death pathways. Involved in buffering the amplitude of systolic calcium rises in cardiomyocytes. While dispensable for baseline homeostatic cardiac function, acts as a key regulator of short-term mitochondrial calcium loading underlying a 'fight-or-flight' response during acute stress: acts by mediating a rapid increase of mitochondrial calcium in pacemaker cells. Mitochondrial calcium uptake in skeletal muscle cells is involved in muscle size in adults. The sequence is that of Calcium uniporter protein, mitochondrial from Danio rerio (Zebrafish).